The chain runs to 209 residues: Uridine kinase (209 aa).

Position 12–19 (12–19) interacts with ATP; that stretch reads GGSASGKT.

The protein belongs to the uridine kinase family.

It localises to the cytoplasm. It carries out the reaction uridine + ATP = UMP + ADP + H(+). It catalyses the reaction cytidine + ATP = CMP + ADP + H(+). The protein operates within pyrimidine metabolism; CTP biosynthesis via salvage pathway; CTP from cytidine: step 1/3. It functions in the pathway pyrimidine metabolism; UMP biosynthesis via salvage pathway; UMP from uridine: step 1/1. This chain is Uridine kinase, found in Chloroflexus aurantiacus (strain ATCC 29366 / DSM 635 / J-10-fl).